The sequence spans 140 residues: Large ribosomal subunit protein uL14 (140 aa).

Ser17 is modified (phosphoserine). A Phosphotyrosine modification is found at Tyr38.

The protein belongs to the universal ribosomal protein uL14 family. Component of the large ribosomal subunit.

The protein resides in the cytoplasm. Functionally, component of the large ribosomal subunit. The ribosome is a large ribonucleoprotein complex responsible for the synthesis of proteins in the cell. The chain is Large ribosomal subunit protein uL14 (RPL23) from Canis lupus familiaris (Dog).